The chain runs to 70 residues: Putative RNA-binding protein YbcJ (70 aa).

The 57-residue stretch at 12–68 (VELCDLLKLEGWSESGAQAKIAIAEGQVKVDGAVETRKRCKIVAGQTVSFAGHSVQV) folds into the S4 RNA-binding domain.

As to quaternary structure, in pull-down experiments interacts with CedA.

Its structure and the presence of conserved basic residues indicates that it probably binds RNA. The protein is Putative RNA-binding protein YbcJ (ybcJ) of Escherichia coli (strain K12).